The primary structure comprises 612 residues: UvrABC system protein C (612 aa).

One can recognise a GIY-YIG domain in the interval 20–98 (THSGVYRMLD…IKQHRPKYNI (79 aa)). Positions 208–243 (SSVLEEISAKMYQASEDMEYEKAQVYRDQLVVLRKL) constitute a UVR domain.

The protein belongs to the UvrC family. Interacts with UvrB in an incision complex.

The protein resides in the cytoplasm. Its function is as follows. The UvrABC repair system catalyzes the recognition and processing of DNA lesions. UvrC both incises the 5' and 3' sides of the lesion. The N-terminal half is responsible for the 3' incision and the C-terminal half is responsible for the 5' incision. The chain is UvrABC system protein C from Francisella tularensis subsp. mediasiatica (strain FSC147).